Consider the following 404-residue polypeptide: Arginine biosynthesis bifunctional protein ArgJ (404 aa).

Substrate-binding residues include Thr-156, Lys-182, Thr-193, Glu-277, Asn-399, and Ser-404. Residue Thr-193 is the Nucleophile of the active site.

The protein belongs to the ArgJ family. In terms of assembly, heterotetramer of two alpha and two beta chains.

Its subcellular location is the cytoplasm. It carries out the reaction N(2)-acetyl-L-ornithine + L-glutamate = N-acetyl-L-glutamate + L-ornithine. The catalysed reaction is L-glutamate + acetyl-CoA = N-acetyl-L-glutamate + CoA + H(+). It participates in amino-acid biosynthesis; L-arginine biosynthesis; L-ornithine and N-acetyl-L-glutamate from L-glutamate and N(2)-acetyl-L-ornithine (cyclic): step 1/1. It functions in the pathway amino-acid biosynthesis; L-arginine biosynthesis; N(2)-acetyl-L-ornithine from L-glutamate: step 1/4. In terms of biological role, catalyzes two activities which are involved in the cyclic version of arginine biosynthesis: the synthesis of N-acetylglutamate from glutamate and acetyl-CoA as the acetyl donor, and of ornithine by transacetylation between N(2)-acetylornithine and glutamate. The polypeptide is Arginine biosynthesis bifunctional protein ArgJ (Chlorobaculum tepidum (strain ATCC 49652 / DSM 12025 / NBRC 103806 / TLS) (Chlorobium tepidum)).